The chain runs to 1312 residues: Rho GTPase-activating protein gacG (1312 aa).

Disordered stretches follow at residues 52–74 (VENN…KRSQ), 111–158 (SNNN…SSSD), 314–519 (ISSS…PRNF), 762–831 (NSIS…SSTG), 1185–1230 (NNNN…SSSV), and 1282–1312 (TGTS…IVEE). Composition is skewed to low complexity over residues 53 to 67 (ENNN…NSEN) and 111 to 146 (SNNN…YSPR). The segment covering 147–158 (NNNNNFTESSSD) has biased composition (polar residues). Low complexity-rich tracts occupy residues 328 to 355 (TTAA…ANNS), 373 to 397 (HHSS…IGNS), and 414 to 436 (LNLT…NNGN). Over residues 437–449 (EVIQSSSSTSSPR) the composition is skewed to polar residues. Low complexity predominate over residues 479–507 (SSTNSLNNSTSSLKSSNNNILQQQQQQQQ). Composition is skewed to polar residues over residues 508 to 518 (HYDSAPTTPRN) and 763 to 776 (SIST…GNIA). Low complexity predominate over residues 792–816 (NNNNNNNNNNNNNNNNNNNNNNNNN). In terms of domain architecture, Rho-GAP spans 1030–1212 (SKIDPITGFN…HHNSHHHRDN (183 aa)). Positions 1196 to 1210 (HHHHHHHHHNSHHHR) are enriched in basic residues. Low complexity-rich tracts occupy residues 1213-1222 (NNNNSNNNSS) and 1282-1305 (TGTS…RSPS).

The protein localises to the cytoplasm. In terms of biological role, rho GTPase-activating protein involved in the signal transduction pathway. This chain is Rho GTPase-activating protein gacG (gacG), found in Dictyostelium discoideum (Social amoeba).